A 183-amino-acid chain; its full sequence is ATP synthase subunit b, chloroplastic (183 aa).

The chain crosses the membrane as a helical span at residues 28–48 (DIFEANVINILLLLFGLIYVL).

This sequence belongs to the ATPase B chain family. As to quaternary structure, F-type ATPases have 2 components, F(1) - the catalytic core - and F(0) - the membrane proton channel. F(1) has five subunits: alpha(3), beta(3), gamma(1), delta(1), epsilon(1). F(0) has four main subunits: a(1), b(1), b'(1) and c(10-14). The alpha and beta chains form an alternating ring which encloses part of the gamma chain. F(1) is attached to F(0) by a central stalk formed by the gamma and epsilon chains, while a peripheral stalk is formed by the delta, b and b' chains.

The protein localises to the plastid. It is found in the chloroplast thylakoid membrane. Its function is as follows. F(1)F(0) ATP synthase produces ATP from ADP in the presence of a proton or sodium gradient. F-type ATPases consist of two structural domains, F(1) containing the extramembraneous catalytic core and F(0) containing the membrane proton channel, linked together by a central stalk and a peripheral stalk. During catalysis, ATP synthesis in the catalytic domain of F(1) is coupled via a rotary mechanism of the central stalk subunits to proton translocation. Functionally, component of the F(0) channel, it forms part of the peripheral stalk, linking F(1) to F(0). The protein is ATP synthase subunit b, chloroplastic of Pyropia yezoensis (Susabi-nori).